The primary structure comprises 345 residues: 4-hydroxy-2-oxovalerate aldolase (345 aa).

The Pyruvate carboxyltransferase domain maps to 8-260 (ITVHDMTLRD…ETGVDVFKIQ (253 aa)). 16-17 (RD) is a substrate binding site. D17 contributes to the Mn(2+) binding site. H20 functions as the Proton acceptor in the catalytic mechanism. Positions 170 and 199 each coordinate substrate. Residues H199 and H201 each contribute to the Mn(2+) site. Residue Y290 participates in substrate binding.

It belongs to the 4-hydroxy-2-oxovalerate aldolase family.

The enzyme catalyses (S)-4-hydroxy-2-oxopentanoate = acetaldehyde + pyruvate. In Leptothrix cholodnii (strain ATCC 51168 / LMG 8142 / SP-6) (Leptothrix discophora (strain SP-6)), this protein is 4-hydroxy-2-oxovalerate aldolase.